The chain runs to 137 residues: Large ribosomal subunit protein bL12 (137 aa).

The protein belongs to the bacterial ribosomal protein bL12 family. Homodimer. Part of the ribosomal stalk of the 50S ribosomal subunit. Forms a multimeric L10(L12)X complex, where L10 forms an elongated spine to which 2 to 4 L12 dimers bind in a sequential fashion. Binds GTP-bound translation factors.

Forms part of the ribosomal stalk which helps the ribosome interact with GTP-bound translation factors. Is thus essential for accurate translation. This is Large ribosomal subunit protein bL12 from Gloeobacter violaceus (strain ATCC 29082 / PCC 7421).